The primary structure comprises 377 residues: Putative F-box only protein 10 (377 aa).

The F-box domain occupies 1-46 (MVSVNLPWELVEEILYRVPPQSLARFRTVCKQWNSLFDDNKFVNDH).

The chain is Putative F-box only protein 10 (FBX10) from Arabidopsis thaliana (Mouse-ear cress).